Consider the following 135-residue polypeptide: RxLR effector protein Avr10 (135 aa).

An N-terminal signal peptide occupies residues 1–19; sequence MRLSFIIFAISLLAGGSGA. Residues 34 to 43 show a composition bias toward polar residues; the sequence is GTNQGASTGK. Residues 34-64 form a disordered region; sequence GTNQGASTGKRSLRYDNNAERAGEEDDEERA. Residues 44 to 63 carry the RxLR-dEER motif; that stretch reads RSLRYDNNAERAGEEDDEER. The segment covering 46 to 55 has biased composition (basic and acidic residues); the sequence is LRYDNNAERA.

This sequence belongs to the RxLR effector family.

It localises to the secreted. Its subcellular location is the host nucleus. It is found in the host cytoplasm. Its function is as follows. Secreted effector that acts as an elicitor of hypersensitive response (HR) specifically on plants carrying defense protein R10. Enhances P.infestans colonization of Nicotiana benthamiana leaves. The sequence is that of RxLR effector protein Avr10 from Phytophthora infestans (strain T30-4) (Potato late blight agent).